The chain runs to 649 residues: MAFNTAMASTSPAAANDVLREHIGLRRSLSGQDLVLKGGGIRRSSSDNHLCCRSGNNNNRILAVSVRPGMKTSRSVGVFSFQISSSIIPSPIKTLLFETDTSQDEQESDEIEIETEPNLDGAKKANWVERLLEIRRQWKREQKTESGNSDVAEESVDVTCGCEEEEGCIANYGSVNGDWGRESFSRLLVKVSWSEAKKLSQLAYLCNLAYTIPEIKGEDLRRNYGLKFVTSSLEKKAKAAILREKLEQDPTHVPVITSPDLESEKQSQRSASSSASAYKIAASAASYIHSCKEYDLSEPIYKSAAAAQAAASTMTAVVAAGEEEKLEAARELQSLQSSPCEWFVCDDPNTYTRCFVIQGSDSLASWKANLFFEPTKFEDTDVLVHRGIYEAAKGIYEQFLPEITEHLSRHGDRAKFQFTGHSLGGSLSLIVNLMLISRGLVSSEAMKSVVTFGSPFVFCGGEKILAELGLDESHVHCVMMHRDIVPRAFSCNYPDHVALVLKRLNGSFRTHPCLNKNKLLYSPMGKVYILQPSESVSPTHPWLPPGNALYILENSNEGYSPTALRAFLNRPHPLETLSQRAAYGSEGSVLRDHDSKNYVKAVNGVLRQHTKLIVRKARIQRRSVWPVLTSAGRGLNESLTTAEEIMTRV.

A chloroplast-targeting transit peptide spans 1–67 (MAFNTAMAST…NNRILAVSVR (67 aa)). The GXSXG signature appears at 420-424 (GHSLG). Serine 422 functions as the Acyl-ester intermediate in the catalytic mechanism. Residues aspartate 483 and histidine 593 each act as charge relay system in the active site.

Belongs to the AB hydrolase superfamily. Lipase family.

The protein localises to the plastid. It is found in the chloroplast thylakoid membrane. It carries out the reaction a 1,2-diacyl-sn-glycero-3-phosphocholine + H2O = a 2-acyl-sn-glycero-3-phosphocholine + a fatty acid + H(+). It catalyses the reaction a 1,2-diacyl-3-O-(beta-D-galactosyl)-sn-glycerol + 2 H2O = 3-beta-D-galactosyl-sn-glycerol + 2 a fatty acid + 2 H(+). In terms of biological role, sn-1-specific phospholipase A1 involved in seed oil biosynthesis. Hydrolyzes polyunsaturated acyl groups from a unique chloroplast-specific phosphatidylglycerol (PG) that contains 16:1 delta 3-trans as its second acyl group. The polyunsaturated acyl groups released by PLIP1 are exported from the chloroplast, reincorporated into phosphatidylcholine (PC), and ultimately enter seed triacylglycerol (TAG). In vitro, possesses broad substrate specificity. Can hydrolyze the galactolipid monogalactosyldiacylglycerol (MGDG), and the phoshpolipids phosphatidylcholine (PC), phosphatidylethanolamine (PE), phosphatidic acid (PA), phosphatidylserine (PS) phosphatidylglycerol (PG) and phosphatidylinositol (PI). This Arabidopsis thaliana (Mouse-ear cress) protein is Phospholipase A1 PLIP1, chloroplastic.